Here is a 146-residue protein sequence, read N- to C-terminus: Acidic phospholipase A2 S14-72F (146 aa).

The first 19 residues, 1 to 19 (MYPAHLLVLLAVCVSLLGA), serve as a signal peptide directing secretion. A propeptide spanning residues 20-27 (ASIPPQPL) is cleaved from the precursor. Disulfide bonds link C38–C98, C54–C145, C56–C72, C71–C126, C78–C119, C87–C112, and C105–C117. Residues Y55, G57, and G59 each contribute to the Ca(2+) site. H75 is an active-site residue. Residue D76 participates in Ca(2+) binding. The active site involves D120.

It belongs to the phospholipase A2 family. Group I subfamily. D49 sub-subfamily. It depends on Ca(2+) as a cofactor. Expressed by the venom gland.

It is found in the secreted. It catalyses the reaction a 1,2-diacyl-sn-glycero-3-phosphocholine + H2O = a 1-acyl-sn-glycero-3-phosphocholine + a fatty acid + H(+). In terms of biological role, snake venom phospholipase A2 (PLA2) that inhibits collagen-induced platelet aggregation. PLA2 catalyzes the calcium-dependent hydrolysis of the 2-acyl groups in 3-sn-phosphoglycerides. In Austrelaps superbus (Lowland copperhead snake), this protein is Acidic phospholipase A2 S14-72F.